The following is a 492-amino-acid chain: Trehalose-6-phosphate synthase (492 aa).

Arginine 25 lines the D-glucose 6-phosphate pocket. 45–46 (GG) lines the UDP-alpha-D-glucose pocket. 2 residues coordinate D-glucose 6-phosphate: tyrosine 101 and aspartate 155. Residues arginine 297 and lysine 302 each contribute to the UDP-alpha-D-glucose site. Arginine 335 contributes to the D-glucose 6-phosphate binding site. Residue 400-404 (LVAKE) participates in UDP-alpha-D-glucose binding.

This sequence belongs to the glycosyltransferase 20 family. In terms of assembly, homotetramer.

It carries out the reaction ADP-alpha-D-glucose + D-glucose 6-phosphate = alpha,alpha-trehalose 6-phosphate + ADP + H(+). The enzyme catalyses CDP-alpha-D-glucose + D-glucose 6-phosphate = alpha,alpha-trehalose 6-phosphate + CDP + H(+). It catalyses the reaction GDP-alpha-D-glucose + D-glucose 6-phosphate = alpha,alpha-trehalose 6-phosphate + GDP + H(+). The catalysed reaction is TDP-alpha-D-glucose + D-glucose 6-phosphate = 5-methyl-UDP + alpha,alpha-trehalose 6-phosphate + H(+). It carries out the reaction D-glucose 6-phosphate + UDP-alpha-D-glucose = alpha,alpha-trehalose 6-phosphate + UDP + H(+). The protein operates within glycan biosynthesis; trehalose biosynthesis. Its function is as follows. Probably involved in the osmoprotection via the biosynthesis of trehalose and in the production of glycogen and alpha-glucan via the TreS-Pep2 branch involved in the biosynthesis of maltose-1-phosphate (M1P). Catalyzes the transfer of glucose from UDP-glucose (UDP-Glc) to D-glucose 6-phosphate (Glc-6-P) to form trehalose-6-phosphate. Probably also able to use ADP-Glc, CDP-Glc, GDP-Glc and TDP-Glc as glucosyl donors. In Mycolicibacterium paratuberculosis (strain ATCC BAA-968 / K-10) (Mycobacterium paratuberculosis), this protein is Trehalose-6-phosphate synthase.